We begin with the raw amino-acid sequence, 451 residues long: CDP-diacylglycerol--serine O-phosphatidyltransferase PssA (451 aa).

2 consecutive PLD phosphodiesterase domains span residues 27-224 (VDFF…ELRD) and 239-451 (SVTP…SRIL). Positions 56, 57, 91, 94, 96, 97, 132, 133, 136, 138, 140, 152, 159, and 167 each coordinate a CDP-1,2-diacyl-sn-glycerol. The active site involves H138. The active site involves D169. Y273, D305, F306, I316, I317, L320, L323, and Y324 together coordinate a CDP-1,2-diacyl-sn-glycerol. H357 is an active-site residue. The a CDP-1,2-diacyl-sn-glycerol site is built by K359, N374, and R378. E385 is a catalytic residue. A CDP-1,2-diacyl-sn-glycerol is bound by residues L438, I447, I450, and L451.

Belongs to the CDP-alcohol phosphatidyltransferase class-II family. In terms of assembly, multimeric. Interacts with ACP, YbgC and PlsB, forming altogether a complex at the inner membrane. Monomeric and dimeric; existing in equilibrium, but the monomer probably exhibits preferential membrane association.

It localises to the cytoplasm. Its subcellular location is the cell inner membrane. The catalysed reaction is a CDP-1,2-diacyl-sn-glycerol + L-serine = a 1,2-diacyl-sn-glycero-3-phospho-L-serine + CMP + H(+). The protein operates within phospholipid metabolism; phosphatidylethanolamine biosynthesis; phosphatidylethanolamine from CDP-diacylglycerol: step 1/2. In terms of biological role, catalyzes the conversion of cytidine diphosphate diacylglycerol (CDP-DG) and L-serine into phosphatidylserine. Essential for biosynthesis of phosphatidylethanolamine, one of the major membrane phospholipids. Phosphatidylserine is later converted into phosphatidylethanolamine via the action of phosphatidylserine decarboxylase psd. Associates with the bacterial membrane for its role, which depends on the levels of anionic phospholipids in the membrane. The sequence is that of CDP-diacylglycerol--serine O-phosphatidyltransferase PssA (pssA) from Escherichia coli (strain K12).